A 156-amino-acid chain; its full sequence is Large ribosomal subunit protein uL15 (156 aa).

The disordered stretch occupies residues Met-1 to Phe-48.

The protein belongs to the universal ribosomal protein uL15 family. Part of the 50S ribosomal subunit. Contacts proteins L4, L21 and L35.

Binds to the 23S rRNA. The polypeptide is Large ribosomal subunit protein uL15 (rplO) (Deinococcus radiodurans (strain ATCC 13939 / DSM 20539 / JCM 16871 / CCUG 27074 / LMG 4051 / NBRC 15346 / NCIMB 9279 / VKM B-1422 / R1)).